The following is a 33-amino-acid chain: Beta-amanitin proprotein (33 aa).

Positions 1-10 are excised as a propeptide; the sequence is MSDINATRLP. The cyclopeptide (Ile-Pro) cross-link spans 11 to 18; sequence IWGIGCDP. Residues 12 to 16 constitute a cross-link (2'-cysteinyl-6'-hydroxytryptophan sulfoxide (Trp-Cys)); the sequence is WGIGC. A propeptide spanning residues 19 to 33 is cleaved from the precursor; that stretch reads CVGDDVAALTTRGEA.

The protein belongs to the MSDIN fungal toxin family. Post-translationally, processed by the macrocyclase-peptidase enzyme POPB to yield a toxic cyclic decapeptide. POPB first removes 10 residues from the N-terminus. Conformational trapping of the remaining peptide forces the enzyme to release this intermediate rather than proceed to macrocyclization. The enzyme rebinds the remaining peptide in a different conformation and catalyzes macrocyclization of the N-terminal 8 residues.

In terms of biological role, toxin belonging to the bicyclic octapeptides amatoxins that acts by binding non-competitively to RNA polymerase II and greatly slowing the elongation of transcripts from target promoters. The sequence is that of Beta-amanitin proprotein from Amanita rimosa.